Consider the following 252-residue polypeptide: Bidirectional sugar transporter SWEET3b (252 aa).

Residues 1–8 lie on the Extracellular side of the membrane; sequence MVSNTIRV. Residues 9-29 traverse the membrane as a helical segment; the sequence is AVGILGNAASMLLYAAPILTF. Residues 10 to 98 form the MtN3/slv 1 domain; sequence VGILGNAASM…SIYTWFAPRE (89 aa). Residues 30–43 are Cytoplasmic-facing; that stretch reads RRVIKKGSVEEFSC. Residues 44–64 traverse the membrane as a helical segment; it reads VPYILALFNCLLYTWYGLPVV. At 65-75 the chain is on the extracellular side; the sequence is SSGWENSTVSS. A glycan (N-linked (GlcNAc...) asparagine) is linked at Asn-70. A helical transmembrane segment spans residues 76 to 96; that stretch reads INGLGILLEIAFISIYTWFAP. At 97-105 the chain is on the cytoplasmic side; that stretch reads RERKKFVLR. A helical transmembrane segment spans residues 106 to 126; it reads MVLPVLAFFALTAIFSSFLFH. The Extracellular segment spans residues 127-132; that stretch reads THGLRK. Residues 133–153 traverse the membrane as a helical segment; it reads VFVGSIGLVASISMYSSPMVA. Residues 134-219 form the MtN3/slv 2 domain; that stretch reads FVGSIGLVAS…LYCIYRKSHK (86 aa). The Cytoplasmic segment spans residues 154–167; the sequence is AKQVITTKSVEFMP. Residues 168 to 188 form a helical membrane-spanning segment; the sequence is FYLSLFSFLSSALWMIYGLLG. Residues 189 to 190 lie on the Extracellular side of the membrane; that stretch reads KD. The helical transmembrane segment at 191–211 threads the bilayer; sequence LFIASPNFIGCPMGILQLVLY. Residues 212–252 lie on the Cytoplasmic side of the membrane; it reads CIYRKSHKEAEKLHDIDQENGLKVVTTHEKITGREPEAQRD.

The protein belongs to the SWEET sugar transporter family. Forms homooligomers and/or heterooligomers.

It is found in the cell membrane. Its function is as follows. Mediates both low-affinity uptake and efflux of sugar across the plasma membrane. This Oryza sativa subsp. japonica (Rice) protein is Bidirectional sugar transporter SWEET3b (SWEET3B).